We begin with the raw amino-acid sequence, 855 residues long: DNA mismatch repair protein MutS (855 aa).

ATP is bound at residue glycine 616–serine 623.

It belongs to the DNA mismatch repair MutS family.

This protein is involved in the repair of mismatches in DNA. It is possible that it carries out the mismatch recognition step. This protein has a weak ATPase activity. The sequence is that of DNA mismatch repair protein MutS from Salmonella gallinarum (strain 287/91 / NCTC 13346).